The following is a 164-amino-acid chain: Transcription antitermination protein NusB (164 aa).

It belongs to the NusB family.

Functionally, involved in transcription antitermination. Required for transcription of ribosomal RNA (rRNA) genes. Binds specifically to the boxA antiterminator sequence of the ribosomal RNA (rrn) operons. The protein is Transcription antitermination protein NusB of Desulfovibrio desulfuricans (strain ATCC 27774 / DSM 6949 / MB).